A 266-amino-acid chain; its full sequence is Type II iodothyronine deiodinase (266 aa).

Topologically, residues 1–13 are lumenal; it reads MGSASEDLLVTLQ. Residues 14–34 form a helical; Signal-anchor for type III membrane protein membrane-spanning segment; it reads ILPGFFSNCLFLALYDSVVLV. Residues 35-266 lie on the Cytoplasmic side of the membrane; the sequence is KRVVALLSRS…QWLELSYGRR (232 aa). The active site involves Sec134. Position 134 (Sec134) is a non-standard amino acid, selenocysteine.

It belongs to the iodothyronine deiodinase family. In terms of assembly, predominantly monomer. Can form homodimers but homodimerization is not essential for enzyme activity.

It localises to the endoplasmic reticulum membrane. The enzyme catalyses 3,3',5-triiodo-L-thyronine + iodide + A + H(+) = L-thyroxine + AH2. It carries out the reaction 3,3'-diiodo-L-thyronine + iodide + A + H(+) = 3,3',5'-triiodo-L-thyronine + AH2. It catalyses the reaction 3'-iodo-L-thyronine + iodide + A + H(+) = 3',5'-diiodo-L-thyronine + AH2. Not inhibited by N(6)-propylthiouracil. Plays a crucial role in the metabolism of thyroid hormones (TH) and has specific roles in TH activation and inactivation by deiodination. Catalyzes the conversion of T4 (L-thyroxine/3,5,3',5'-tetraiodothyronine) to T3 (3,5,3'-triiodothyronine) and rT3 (3,3',5'-triiodothyronine) to T2 (3,3'-diiodothyronine) via outer-ring deiodination (ORD). Catalyzes the conversion 3',5'-T2 (3,5-diiodothyronine) to 3-T1 (3-monoiodothyronine) via ORD. The chain is Type II iodothyronine deiodinase (dio2) from Fundulus heteroclitus (Killifish).